The primary structure comprises 273 residues: Cell division cycle-associated protein 3 (273 aa).

Disordered stretches follow at residues 1–231 (MGST…ALSE) and 251–273 (GGGA…LMES). Phosphoserine occurs at positions 29 and 31. Residues 32-45 (AGIQRTPIQVESSP) show a composition bias toward polar residues. T37 carries the phosphothreonine modification. Phosphoserine occurs at positions 44 and 67. T75 is subject to Phosphothreonine. Positions 90-124 (KELSEVFETEVSETEVSESISSPVLGLPQETPLSS) are F-box-like. Phosphoserine is present on S93. Residues 94–105 (EVFETEVSETEV) are compositionally biased toward acidic residues. Polar residues-rich tracts occupy residues 144 to 154 (PWSQTELNSKQ) and 164 to 175 (STETMVSGQTSD). A Phosphoserine modification is found at S204. T207 carries the phosphothreonine modification. Positions 210 to 220 (QDDNSPGTLTL) are enriched in polar residues. S214 carries the post-translational modification Phosphoserine. Residue T217 is modified to Phosphothreonine. The KEN box signature appears at 263 to 265 (KEN).

As to quaternary structure, interacts with SKP1. Part of a SCF (SKP1-cullin-F-box) protein ligase complex. In terms of processing, ubiquitinated and degraded by the APC/C-Cdh1 complex.

The protein localises to the cytoplasm. It localises to the cytosol. The protein operates within protein modification; protein ubiquitination. Functionally, F-box-like protein which is required for entry into mitosis. Acts by participating in E3 ligase complexes that mediate the ubiquitination and degradation of WEE1 kinase at G2/M phase. In Rattus norvegicus (Rat), this protein is Cell division cycle-associated protein 3 (Cdca3).